Reading from the N-terminus, the 255-residue chain is Arginine-binding extracellular protein ArtP (255 aa).

Residues 1 to 19 (MKKWLLLLVAACITFALTA) form the signal peptide. Cys20 carries N-palmitoyl cysteine lipidation. Cys20 carries the S-diacylglycerol cysteine lipid modification.

It belongs to the bacterial solute-binding protein 3 family.

The protein localises to the cell membrane. In terms of biological role, part of a binding-protein-dependent transport system for arginine. In Bacillus subtilis (strain 168), this protein is Arginine-binding extracellular protein ArtP (artP).